Consider the following 431-residue polypeptide: Enolase (431 aa).

Position 163 (Q163) interacts with (2R)-2-phosphoglycerate. Residue E205 is the Proton donor of the active site. Positions 242, 288, and 315 each coordinate Mg(2+). Residues K340, R369, S370, and K391 each contribute to the (2R)-2-phosphoglycerate site. The Proton acceptor role is filled by K340.

The protein belongs to the enolase family. It depends on Mg(2+) as a cofactor.

It is found in the cytoplasm. The protein localises to the secreted. Its subcellular location is the cell surface. The enzyme catalyses (2R)-2-phosphoglycerate = phosphoenolpyruvate + H2O. It participates in carbohydrate degradation; glycolysis; pyruvate from D-glyceraldehyde 3-phosphate: step 4/5. Functionally, catalyzes the reversible conversion of 2-phosphoglycerate (2-PG) into phosphoenolpyruvate (PEP). It is essential for the degradation of carbohydrates via glycolysis. The chain is Enolase from Bacillus cereus (strain B4264).